A 1629-amino-acid chain; its full sequence is Ferredoxin-dependent glutamate synthase 2, chloroplastic (1629 aa).

A chloroplast-targeting transit peptide spans 1-107 (MALQSPGATG…LEDIISERGA (107 aa)). Cys108 acts as the For GATase activity in catalysis. The Glutamine amidotransferase type-2 domain occupies 108–507 (CGVGFIANLE…PGMMISVDLE (400 aa)). 1186–1243 (LAETQKTLIGNGLRERVIIRVDGGFKSGVDVLIAAAMGADEYGFGTLAMIATGCIMAR) contacts FMN. Positions 1239, 1245, and 1250 each coordinate [3Fe-4S] cluster. The tract at residues 1599–1629 (SEEDTPEANSDHILKTTTGDEEQVSSTLAEK) is disordered.

This sequence belongs to the glutamate synthase family. Requires [3Fe-4S] cluster as cofactor. FAD is required as a cofactor. The cofactor is FMN. As to expression, expressed predominantly in roots and slightly in leaves. Low expression in the leaf mesophyll and phloem companion cell-sieve element complex.

It localises to the plastid. It is found in the chloroplast stroma. It catalyses the reaction 2 oxidized [2Fe-2S]-[ferredoxin] + 2 L-glutamate = L-glutamine + 2 reduced [2Fe-2S]-[ferredoxin] + 2-oxoglutarate + 2 H(+). Its pathway is amino-acid biosynthesis; L-glutamate biosynthesis via GLT pathway; L-glutamate from 2-oxoglutarate and L-glutamine (ferredoxin route): step 1/1. It functions in the pathway energy metabolism; nitrogen metabolism. Functionally, may play a role in primary nitrogen assimilation in roots. Could supply a constitutive level of glutamate to maintain a basal level of protein synthesis. This is Ferredoxin-dependent glutamate synthase 2, chloroplastic (GLU2) from Arabidopsis thaliana (Mouse-ear cress).